The sequence spans 127 residues: Large ribosomal subunit protein uL22 (127 aa).

The protein belongs to the universal ribosomal protein uL22 family. In terms of assembly, part of the 50S ribosomal subunit.

This protein binds specifically to 23S rRNA; its binding is stimulated by other ribosomal proteins, e.g. L4, L17, and L20. It is important during the early stages of 50S assembly. It makes multiple contacts with different domains of the 23S rRNA in the assembled 50S subunit and ribosome. In terms of biological role, the globular domain of the protein is located near the polypeptide exit tunnel on the outside of the subunit, while an extended beta-hairpin is found that lines the wall of the exit tunnel in the center of the 70S ribosome. This Methylobacterium nodulans (strain LMG 21967 / CNCM I-2342 / ORS 2060) protein is Large ribosomal subunit protein uL22.